The following is a 143-amino-acid chain: Transcriptional regulator MraZ (143 aa).

SpoVT-AbrB domains follow at residues 5 to 47 and 76 to 119; these read QYEH…SLDE and AVEC…SKEV.

The protein belongs to the MraZ family. Forms oligomers.

Its subcellular location is the cytoplasm. It localises to the nucleoid. This Caldanaerobacter subterraneus subsp. tengcongensis (strain DSM 15242 / JCM 11007 / NBRC 100824 / MB4) (Thermoanaerobacter tengcongensis) protein is Transcriptional regulator MraZ.